Here is a 139-residue protein sequence, read N- to C-terminus: Small ribosomal subunit protein bS6 (139 aa).

Over residues 114-133 (KKEPREPRAPREPRVEKVDE) the composition is skewed to basic and acidic residues. Positions 114–139 (KKEPREPRAPREPRVEKVDEQTFTEE) are disordered.

This sequence belongs to the bacterial ribosomal protein bS6 family.

Its function is as follows. Binds together with bS18 to 16S ribosomal RNA. The chain is Small ribosomal subunit protein bS6 from Campylobacter concisus (strain 13826).